Consider the following 304-residue polypeptide: MKRAHPDYSSSDSELDETVEVEKESADENGNLSSALGSMSPTTSSQILARKRRRGIIEKRRRDRINNSLSELRRLVPSAFEKQGSAKLEKAEILQMTVDHLKMLHTAGGKGYFDAHALAMDYRSLGFRECLAEVARYLSIIEGLDASDPLRVRLVSHLNNYASQREAASGAHAGLGHLPWGSAFGHHPHVAHPLLLPQSGHGNTGTSASPTDPHHQGRLAAAHPEAPALRAPPSGGLGPVLPVVTSASKLSPPLLSSVASLSAFPFSFGSFHLLSPNALSPSAPTQAANLGKPYRPWGTEIGAF.

Residues 1–52 form a disordered region; the sequence is MKRAHPDYSSSDSELDETVEVEKESADENGNLSSALGSMSPTTSSQILARKR. Polar residues predominate over residues 28 to 47; that stretch reads ENGNLSSALGSMSPTTSSQI. The tract at residues 48–117 is transcriptional repression and interaction with NCOR1 and SIN3A; it reads LARKRRRGII…GGKGYFDAHA (70 aa). The region spanning 49–104 is the bHLH domain; it reads ARKRRRGIIEKRRRDRINNSLSELRRLVPSAFEKQGSAKLEKAEILQMTVDHLKML. In terms of domain architecture, Orange spans 122-158; it reads YRSLGFRECLAEVARYLSIIEGLDASDPLRVRLVSHL. The disordered stretch occupies residues 191–234; that stretch reads AHPLLLPQSGHGNTGTSASPTDPHHQGRLAAAHPEAPALRAPPS. Polar residues predominate over residues 200-210; that stretch reads GHGNTGTSASP. Positions 218 to 234 are enriched in low complexity; sequence RLAAAHPEAPALRAPPS.

This sequence belongs to the HEY family. Self-associates. Interacts with HES1 and HEYL. Interacts with HDAC1, NCOR1 and SIN3A. Interacts with GATA4 and GATA6. Interacts with CCDC89/BOIP.

It localises to the nucleus. In terms of biological role, transcriptional repressor which binds preferentially to the canonical E box sequence 5'-CACGTG-3'. Downstream effector of Notch signaling required for cardiovascular development. Specifically required for the Notch-induced endocardial epithelial to mesenchymal transition, which is itself criticial for cardiac valve and septum development. May be required in conjunction with HEY2 to specify arterial cell fate or identity. Promotes maintenance of neuronal precursor cells and glial versus neuronal fate specification. Represses transcription by the cardiac transcriptional activators GATA4 and GATA6 and by the neuronal bHLH factors ASCL1/MASH1 and NEUROD4/MATH3. This is Hairy/enhancer-of-split related with YRPW motif protein 1 (HEY1) from Canis lupus familiaris (Dog).